A 426-amino-acid polypeptide reads, in one-letter code: MKKSIFTSLYLQVLVAITIGILLGHFYPDLGTQMKPLGDGFVKLIKMIIAPVIFCTVVTGIAGMESMKAVGRTGAIALLYFEVVSTIALIIGLVVVNILQPGVGMNVDPNALDTKAVAVYADQAAQQGIVAFLLDVIPSSVIGAFASGNILQVLLFAVMFGFALHHLGEKGQLIFNVIDSFAKVIFGVINMIMKLAPIGAFGAMAFTIGKYGVGTLVQLGQLILCFYITCALFVVLVLGSIAKATGFSIFRFIAYIKEELLIVLGTSSSESALPRMLDKMEKVGCQKSVVGLVIPTGYSFNLDGTSIYLTMAAVFIAQATNAQMDIWHQVTLLVVLLLSSKGAAGVTGSGFIVLAATLSAVGHLPVAGLALILGIDRFMSEARALTNLIGNGVATIVVAKRCRQLNEKQMNAVLGGRDSALRDPIA.

The next 8 membrane-spanning stretches (helical) occupy residues 4-24 (SIFT…ILLG), 44-64 (LIKM…IAGM), 76-96 (IALL…LVVV), 142-162 (IGAF…MFGF), 184-204 (VIFG…FGAM), 222-242 (LILC…GSIA), 326-346 (IWHQ…AAGV), and 352-372 (IVLA…LALI).

It belongs to the dicarboxylate/amino acid:cation symporter (DAACS) (TC 2.A.23) family.

The protein resides in the cell inner membrane. In terms of biological role, responsible for the transport of dicarboxylates such as succinate, fumarate, and malate from the periplasm across the membrane. In Edwardsiella ictaluri (strain 93-146), this protein is C4-dicarboxylate transport protein.